Here is a 165-residue protein sequence, read N- to C-terminus: SsrA-binding protein (165 aa).

A disordered region spans residues K141–Y165. The span at K145–K159 shows a compositional bias: basic and acidic residues.

The protein belongs to the SmpB family.

The protein localises to the cytoplasm. Its function is as follows. Required for rescue of stalled ribosomes mediated by trans-translation. Binds to transfer-messenger RNA (tmRNA), required for stable association of tmRNA with ribosomes. tmRNA and SmpB together mimic tRNA shape, replacing the anticodon stem-loop with SmpB. tmRNA is encoded by the ssrA gene; the 2 termini fold to resemble tRNA(Ala) and it encodes a 'tag peptide', a short internal open reading frame. During trans-translation Ala-aminoacylated tmRNA acts like a tRNA, entering the A-site of stalled ribosomes, displacing the stalled mRNA. The ribosome then switches to translate the ORF on the tmRNA; the nascent peptide is terminated with the 'tag peptide' encoded by the tmRNA and targeted for degradation. The ribosome is freed to recommence translation, which seems to be the essential function of trans-translation. The sequence is that of SsrA-binding protein from Prochlorococcus marinus (strain MIT 9313).